Here is a 130-residue protein sequence, read N- to C-terminus: Large ribosomal subunit protein bL31c (130 aa).

The N-terminal 36 residues, 1–36, are a transit peptide targeting the chloroplast; sequence MVLTLSNQFLAKIPATPKTLTLPKTSSSTLRPQWSC.

It belongs to the bacterial ribosomal protein bL31 family. Type A subfamily. In terms of assembly, component of the chloroplast large ribosomal subunit (LSU). Mature 70S chloroplast ribosomes of higher plants consist of a small (30S) and a large (50S) subunit. The 30S small subunit contains 1 molecule of ribosomal RNA (16S rRNA) and 24 different proteins. The 50S large subunit contains 3 rRNA molecules (23S, 5S and 4.5S rRNA) and 33 different proteins.

Its subcellular location is the plastid. The protein localises to the chloroplast. Functionally, component of the chloroplast ribosome (chloro-ribosome), a dedicated translation machinery responsible for the synthesis of chloroplast genome-encoded proteins, including proteins of the transcription and translation machinery and components of the photosynthetic apparatus. In Spinacia oleracea (Spinach), this protein is Large ribosomal subunit protein bL31c (RPL31).